The following is a 361-amino-acid chain: Probable dual-specificity RNA methyltransferase RlmN (361 aa).

Catalysis depends on E91, which acts as the Proton acceptor. Positions 97-329 (QHYGLSVCVT…KKKGGNCVVR (233 aa)) constitute a Radical SAM core domain. C104 and C340 are joined by a disulfide. Residues C111, C115, and C118 each contribute to the [4Fe-4S] cluster site. S-adenosyl-L-methionine contacts are provided by residues 163–164 (GE), S195, 218–220 (SLH), and N296. The active-site S-methylcysteine intermediate is the C340.

It belongs to the radical SAM superfamily. RlmN family. [4Fe-4S] cluster is required as a cofactor.

It localises to the cytoplasm. It catalyses the reaction adenosine(2503) in 23S rRNA + 2 reduced [2Fe-2S]-[ferredoxin] + 2 S-adenosyl-L-methionine = 2-methyladenosine(2503) in 23S rRNA + 5'-deoxyadenosine + L-methionine + 2 oxidized [2Fe-2S]-[ferredoxin] + S-adenosyl-L-homocysteine. It carries out the reaction adenosine(37) in tRNA + 2 reduced [2Fe-2S]-[ferredoxin] + 2 S-adenosyl-L-methionine = 2-methyladenosine(37) in tRNA + 5'-deoxyadenosine + L-methionine + 2 oxidized [2Fe-2S]-[ferredoxin] + S-adenosyl-L-homocysteine. Specifically methylates position 2 of adenine 2503 in 23S rRNA and position 2 of adenine 37 in tRNAs. The chain is Probable dual-specificity RNA methyltransferase RlmN from Streptococcus pneumoniae (strain Hungary19A-6).